Consider the following 254-residue polypeptide: Serotonin N-acetyltransferase 1, chloroplastic (254 aa).

Residues 1–74 (MAPAASASAS…LRSGFLKSNN (74 aa)) constitute a chloroplast transit peptide. The N-acetyltransferase domain occupies 111–254 (IIFSSAGDVN…IKGMFWYPRF (144 aa)).

It belongs to the acetyltransferase family. As to expression, expressed in roots and shoots.

It is found in the plastid. Its subcellular location is the chloroplast. The protein resides in the nucleus. The enzyme catalyses serotonin + acetyl-CoA = N-acetylserotonin + CoA + H(+). The catalysed reaction is tyramine + acetyl-CoA = N-acetyltyramine + CoA + H(+). It catalyses the reaction tryptamine + acetyl-CoA = N-acetyltryptamine + CoA + H(+). It carries out the reaction 5-methoxytryptamine + acetyl-CoA = melatonin + CoA + H(+). It functions in the pathway aromatic compound metabolism; melatonin biosynthesis; melatonin from serotonin: step 1/2. Functionally, catalyzes the N-acetylation of serotonin into N-acetylserotonin, the penultimate step in the synthesis of melatonin. Catalyzes in vitro the N-acetylation of tryptamine to produce N-acetyltryptamine, 5-methoxytryptamine to produce melatonin and tyramine to produce N-acetyltyramine. In Oryza sativa subsp. japonica (Rice), this protein is Serotonin N-acetyltransferase 1, chloroplastic.